A 468-amino-acid polypeptide reads, in one-letter code: Protein C-ets-2 (468 aa).

Positions 85–170 constitute a PNT domain; that stretch reads ATFSGFQKEQ…EHLEQMIKEN (86 aa). 2 positions are modified to phosphoserine: S220 and S225. The interval 262-290 is disordered; it reads VNLLNNNSGKPKDHDSPENGGDSFESSDS. S294, S297, and S300 each carry phosphoserine. Positions 362–442 form a DNA-binding region, ETS; it reads IQLWQFLLEL…SGKRYVYRFV (81 aa).

The protein belongs to the ETS family. Phosphorylation by CDK10 at Ser-220 and Ser-225 creates a phosphodegron that targets ETS2 for proteasomal degradation.

The protein resides in the nucleus. Its function is as follows. Transcription factor activating transcription. Binds specifically the GGA DNA motif in gene promoters and stimulates transcription of those genes. The protein is Protein C-ets-2 (Ets2) of Mus musculus (Mouse).